Reading from the N-terminus, the 480-residue chain is Major facilitator superfamily domain-containing protein 12 (480 aa).

Position 1 is an N-acetylmethionine (M1). Topologically, residues 1–26 are cytoplasmic; it reads MGPGPPAAGAAPSPRPLSLVARLSYA. A helical membrane pass occupies residues 27 to 47; sequence VGHFLNDLCASMWFTYLLLYL. At 48 to 56 the chain is on the lumenal side; sequence HSVRAYSSR. The helical transmembrane segment at 57–77 threads the bilayer; that stretch reads GAGLLLLLGQVADGLCTPLVG. At 78 to 97 the chain is on the cytoplasmic side; that stretch reads YEADRAASCCARYGPRKAWH. Residues 98-118 form a helical membrane-spanning segment; it reads LVGTVCVLLSFPFIFSPCLGC. Topologically, residues 119 to 124 are lumenal; that stretch reads GAATPE. A helical membrane pass occupies residues 125 to 145; it reads WAALLYYGPFIVIFQFGWAST. Over 146–170 the chain is Cytoplasmic; it reads QISHLSLIPELVTNDHEKVELTALR. The chain crosses the membrane as a helical span at residues 171–191; sequence YAFTVVANITVYGAAWLLLHL. Topologically, residues 192–218 are lumenal; sequence QGSSRVEPTQDISISDQLGGQDVPVFR. A helical transmembrane segment spans residues 219-239; the sequence is NLSLLVVGVGAVFSLLFHLGT. At 240 to 279 the chain is on the cytoplasmic side; that stretch reads RERRRPHAEEPGEHTPLLAPATAQPLLLWKHWLREPAFYQ. T254 bears the Phosphothreonine; by MTOR mark. The chain crosses the membrane as a helical span at residues 280-302; the sequence is VGILYMTTRLIVNLSQTYMAMYL. The Lumenal portion of the chain corresponds to 303–310; the sequence is TYSLHLPK. The chain crosses the membrane as a helical span at residues 311 to 331; sequence KFIATIPLVMYLSGFLSSFLM. Topologically, residues 332–347 are cytoplasmic; that stretch reads KPINKCIGRNMTYFSG. 2 helical membrane-spanning segments follow: residues 348–368 and 369–389; these read LLVILAFAAWVALAEGLGVAV and YAAAVLLGAGCATILVTSLAM. Residues 390–402 are Cytoplasmic-facing; sequence TADLIGPHTNSGA. The chain crosses the membrane as a helical span at residues 403 to 423; it reads FVYGSMSFLDKVANGLAVMAI. At 424–446 the chain is on the lumenal side; the sequence is QSLHPCPSELCCRACVSFYHWAM. The chain crosses the membrane as a helical span at residues 447–467; that stretch reads VAVTGGVGVAAALCLCSLLLW. The Cytoplasmic segment spans residues 468 to 480; it reads PTRLRRWDRDARP.

Belongs to the major facilitator superfamily. In terms of processing, phosphorylation at Thr-254 by MTOR via mTORC1 pathway promotes cysteine transport in lysosomes, thereby regulating lysosomal cysteine and cystine storage and redox homeostasis. As to expression, widely expressed, with high expression in primary melanocytes.

It localises to the melanosome membrane. The protein resides in the lysosome membrane. The catalysed reaction is L-cysteine(in) = L-cysteine(out). Functionally, transporter that mediates the import of cysteine into melanosomes, thereby regulating skin pigmentation. In melanosomes, cysteine import is required both for normal levels of cystine, the oxidized dimer of cysteine, and provide cysteine for the production of the cysteinyldopas used in pheomelanin synthesis, thereby regulating skin pigmentation. Also catalyzes import of cysteine into lysosomes in non-pigmented cells, regulating lysosomal cystine and cysteine storage, which is essnetial for redox homeostasis. The chain is Major facilitator superfamily domain-containing protein 12 from Homo sapiens (Human).